The chain runs to 269 residues: MHVFGLIGYPLNYTLSPQIHNYVFKRLRIDAAYVPLRVASKRLLHFIEFSRDALSGFNVTIPHKVAVAKLIDELNDDADTIKSVNTVVNSNQKLIGYNTDYVAVEESLIERGYKGEEALLIGAGGAARAVVLALSKTGCRAIKVLNRSRERAVELCGLANGLGLDCSVVDIGGNYGKPHVIINATPLSSEEYWLLNLGELGTMLLLDMAYKPNTETDLIKRARELGIQVIDGVEILVRQALAADKLWLGDFNEPSASEVIKYIKGINPS.

Residues 14-16 (TLS) and threonine 60 contribute to the shikimate site. Lysine 64 acts as the Proton acceptor in catalysis. Residue aspartate 76 coordinates NADP(+). Shikimate contacts are provided by asparagine 85 and aspartate 100. NADP(+) contacts are provided by residues 122–126 (GAGGA) and methionine 208. Tyrosine 210 contributes to the shikimate binding site. NADP(+) is bound at residue glycine 232.

This sequence belongs to the shikimate dehydrogenase family. Homodimer.

It carries out the reaction shikimate + NADP(+) = 3-dehydroshikimate + NADPH + H(+). It participates in metabolic intermediate biosynthesis; chorismate biosynthesis; chorismate from D-erythrose 4-phosphate and phosphoenolpyruvate: step 4/7. Functionally, involved in the biosynthesis of the chorismate, which leads to the biosynthesis of aromatic amino acids. Catalyzes the reversible NADPH linked reduction of 3-dehydroshikimate (DHSA) to yield shikimate (SA). The protein is Shikimate dehydrogenase (NADP(+)) of Caldivirga maquilingensis (strain ATCC 700844 / DSM 13496 / JCM 10307 / IC-167).